The primary structure comprises 221 residues: 2-amino-5-formylamino-6-ribosylaminopyrimidin-4(3H)-one 5'-monophosphate deformylase (221 aa).

4 residues coordinate Fe cation: Glu29, His31, Asp40, and His108.

Belongs to the creatininase superfamily. FAPy deformylase family. Homodimer. Requires Fe(2+) as cofactor. The cofactor is Zn(2+).

The enzyme catalyses 2-amino-5-formylamino-6-(5-phospho-D-ribosylamino)pyrimidin-4(3H)-one + H2O = 2,5-diamino-6-(1-D-ribosylamino)pyrimidin-4(3H)-one 5'-phosphate + formate + H(+). It participates in cofactor biosynthesis; coenzyme F420 biosynthesis. It functions in the pathway cofactor biosynthesis; riboflavin biosynthesis. Catalyzes the hydrolysis of the formamide of 2-amino-5-formylamino-6-ribosylamino-4(3H)-pyrimidinone 5'-monophosphate (FAPy) to form 2,5-diamino-6-ribosylamino-4(3H)-pyrimidinone 5'-phosphate (APy). This chain is 2-amino-5-formylamino-6-ribosylaminopyrimidin-4(3H)-one 5'-monophosphate deformylase, found in Methanococcus maripaludis (strain C5 / ATCC BAA-1333).